The chain runs to 131 residues: SPbeta prophage-derived uncharacterized protein YomZ (131 aa).

This Bacillus subtilis (strain 168) protein is SPbeta prophage-derived uncharacterized protein YomZ (yomZ).